A 335-amino-acid chain; its full sequence is Acetyl-coenzyme A carboxylase carboxyl transferase subunit alpha (335 aa).

The CoA carboxyltransferase C-terminal domain maps to 40–294 (QLETLATRRR…KGAIEKHLNE (255 aa)).

The protein belongs to the AccA family. In terms of assembly, acetyl-CoA carboxylase is a heterohexamer composed of biotin carboxyl carrier protein (AccB), biotin carboxylase (AccC) and two subunits each of ACCase subunit alpha (AccA) and ACCase subunit beta (AccD).

The protein resides in the cytoplasm. It catalyses the reaction N(6)-carboxybiotinyl-L-lysyl-[protein] + acetyl-CoA = N(6)-biotinyl-L-lysyl-[protein] + malonyl-CoA. The protein operates within lipid metabolism; malonyl-CoA biosynthesis; malonyl-CoA from acetyl-CoA: step 1/1. Functionally, component of the acetyl coenzyme A carboxylase (ACC) complex. First, biotin carboxylase catalyzes the carboxylation of biotin on its carrier protein (BCCP) and then the CO(2) group is transferred by the carboxyltransferase to acetyl-CoA to form malonyl-CoA. The chain is Acetyl-coenzyme A carboxylase carboxyl transferase subunit alpha from Prochlorococcus marinus subsp. pastoris (strain CCMP1986 / NIES-2087 / MED4).